The chain runs to 533 residues: Probable fucosyltransferase 5 (533 aa).

Topologically, residues 1–13 (MYQKFQISGKIVK) are cytoplasmic. The chain crosses the membrane as a helical; Signal-anchor for type II membrane protein span at residues 14–34 (TLGLKMKVLIAVSFGSLLFIL). Residues 35 to 533 (SYSNNFNNKL…YGGLKLYDEF (499 aa)) lie on the Lumenal side of the membrane. Residues asparagine 202, asparagine 227, asparagine 374, asparagine 396, and asparagine 475 are each glycosylated (N-linked (GlcNAc...) asparagine).

The protein belongs to the glycosyltransferase 37 family. Expressed in roots, leaves, flowers and siliques.

The protein localises to the golgi apparatus. Its subcellular location is the golgi stack membrane. It participates in protein modification; protein glycosylation. Its function is as follows. May be involved in cell wall biosynthesis. May act as a fucosyltransferase. This chain is Probable fucosyltransferase 5 (FUT5), found in Arabidopsis thaliana (Mouse-ear cress).